The following is a 421-amino-acid chain: Medium-chain specific acyl-CoA dehydrogenase, mitochondrial (421 aa).

The N-terminal 25 residues, 1 to 25, are a transit peptide targeting the mitochondrion; sequence MAAAFRRGCRVLRSVSHFECRTQHS. Lysine 30 and lysine 69 each carry N6-acetyllysine; alternate. Residues lysine 30 and lysine 69 each carry the N6-succinyllysine; alternate modification. Lysine 79 bears the N6-acetyllysine mark. FAD is bound at residue 158-167; sequence YCVTEPSAGS. Residue serine 167 coordinates octanoyl-CoA. Lysine 179 is modified (N6-succinyllysine). 191 to 193 provides a ligand contact to FAD; that stretch reads WIT. N6-acetyllysine; alternate is present on lysine 212. Lysine 212 is subject to N6-succinyllysine; alternate. An octanoyl-CoA-binding site is contributed by serine 216. 4 positions are modified to N6-acetyllysine; alternate: lysine 217, lysine 235, lysine 259, and lysine 271. N6-succinyllysine; alternate occurs at positions 217, 235, 259, and 271. Positions 278 and 281 each coordinate octanoyl-CoA. Lysine 301 is modified (N6-acetyllysine). Residues 306–308 and 316–317 each bind FAD; these read RKT and HQ. 2 residues coordinate octanoyl-CoA: arginine 349 and threonine 351. Threonine 351 carries the post-translational modification Phosphothreonine. Residue 374–378 participates in FAD binding; that stretch reads QIFGG. Glutamate 401 lines the octanoyl-CoA pocket. Glutamate 401 (proton acceptor) is an active-site residue. 402 to 405 is a binding site for FAD; the sequence is GTAQ.

This sequence belongs to the acyl-CoA dehydrogenase family. In terms of assembly, homotetramer. Interacts with the heterodimeric electron transfer flavoprotein ETF. FAD serves as cofactor. In terms of processing, acetylated. Could occur at proximity of the cofactor-binding sites and reduce the catalytic activity. Could be deacetylated by SIRT3.

It is found in the mitochondrion matrix. The catalysed reaction is a medium-chain 2,3-saturated fatty acyl-CoA + oxidized [electron-transfer flavoprotein] + H(+) = a medium-chain (2E)-enoyl-CoA + reduced [electron-transfer flavoprotein]. It carries out the reaction pentanoyl-CoA + oxidized [electron-transfer flavoprotein] + H(+) = (2E)-pentenoyl-CoA + reduced [electron-transfer flavoprotein]. The enzyme catalyses hexanoyl-CoA + oxidized [electron-transfer flavoprotein] + H(+) = (2E)-hexenoyl-CoA + reduced [electron-transfer flavoprotein]. It catalyses the reaction octanoyl-CoA + oxidized [electron-transfer flavoprotein] + H(+) = (2E)-octenoyl-CoA + reduced [electron-transfer flavoprotein]. The catalysed reaction is decanoyl-CoA + oxidized [electron-transfer flavoprotein] + H(+) = (2E)-decenoyl-CoA + reduced [electron-transfer flavoprotein]. It carries out the reaction dodecanoyl-CoA + oxidized [electron-transfer flavoprotein] + H(+) = (2E)-dodecenoyl-CoA + reduced [electron-transfer flavoprotein]. The enzyme catalyses tetradecanoyl-CoA + oxidized [electron-transfer flavoprotein] + H(+) = (2E)-tetradecenoyl-CoA + reduced [electron-transfer flavoprotein]. It catalyses the reaction oxidized [electron-transfer flavoprotein] + hexadecanoyl-CoA + H(+) = (2E)-hexadecenoyl-CoA + reduced [electron-transfer flavoprotein]. It functions in the pathway lipid metabolism; mitochondrial fatty acid beta-oxidation. Medium-chain specific acyl-CoA dehydrogenase is one of the acyl-CoA dehydrogenases that catalyze the first step of mitochondrial fatty acid beta-oxidation, an aerobic process breaking down fatty acids into acetyl-CoA and allowing the production of energy from fats. The first step of fatty acid beta-oxidation consists in the removal of one hydrogen from C-2 and C-3 of the straight-chain fatty acyl-CoA thioester, resulting in the formation of trans-2-enoyl-CoA. Electron transfer flavoprotein (ETF) is the electron acceptor that transfers electrons to the main mitochondrial respiratory chain via ETF-ubiquinone oxidoreductase (ETF dehydrogenase). Among the different mitochondrial acyl-CoA dehydrogenases, medium-chain specific acyl-CoA dehydrogenase acts specifically on acyl-CoAs with saturated 6 to 12 carbons long primary chains. In Mus musculus (Mouse), this protein is Medium-chain specific acyl-CoA dehydrogenase, mitochondrial.